A 323-amino-acid chain; its full sequence is Porphobilinogen deaminase (323 aa).

Position 251 is an S-(dipyrrolylmethanemethyl)cysteine (cysteine 251).

This sequence belongs to the HMBS family. Monomer. Requires dipyrromethane as cofactor.

It carries out the reaction 4 porphobilinogen + H2O = hydroxymethylbilane + 4 NH4(+). It functions in the pathway porphyrin-containing compound metabolism; protoporphyrin-IX biosynthesis; coproporphyrinogen-III from 5-aminolevulinate: step 2/4. Its pathway is porphyrin-containing compound metabolism; chlorophyll biosynthesis. Its function is as follows. Tetrapolymerization of the monopyrrole PBG into the hydroxymethylbilane pre-uroporphyrinogen in several discrete steps. This chain is Porphobilinogen deaminase (hemC), found in Nostoc sp. (strain PCC 7120 / SAG 25.82 / UTEX 2576).